Reading from the N-terminus, the 298-residue chain is MNFDNKNKNDNYQESIQRIVNQRNNLLKEIENKINQQFGNGNYETLIKSIELIYEIEEKIKRIKELNSLQCDLLEYINPTNSMVPTSPFSSPNFPNSNIEIIDQKQHHQQKLQQQQQQQQQQQQQQQQQQQQQQQQQQQQKQQQKQQQQQLQQSHTKQSPKKQGHNSKQQFLTSLEKHKDQKEENEENEENEENEENEENEENKEKDVEVAKSNKPKRGRPSKPKPEYCFRYGTRSCPYWRKNVIKGELVDVCNACGLHLMKKEKKDLMEKQKNSIKNLLNNDEIITNYDDLGFVLYN.

Positions 4–37 (DNKNKNDNYQESIQRIVNQRNNLLKEIENKINQQ) form a coiled coil. The tract at residues 148–227 (QQQLQQSHTK…RGRPSKPKPE (80 aa)) is disordered. Acidic residues predominate over residues 183-202 (EENEENEENEENEENEENEE). A compositionally biased stretch (basic and acidic residues) spans 203–212 (NKEKDVEVAK). A compositionally biased stretch (basic residues) spans 214-223 (NKPKRGRPSK). Residues 229–256 (CFRYGTRSCPYWRKNVIKGELVDVCNAC) form a GATA-type; degenerate zinc finger.

In Dictyostelium discoideum (Social amoeba), this protein is Putative GATA zinc finger domain-containing protein 25 (gtaY).